Here is a 648-residue protein sequence, read N- to C-terminus: Probable ATP-dependent RNA helicase DDX43 (648 aa).

The segment at 1-60 (MSHHGGAPKASTWVVASRRSSTVSRAPERRPAEELNRTGPEGYSVGRGGRWRGTSRPPEA) is disordered. Residues 10–25 (ASTWVVASRRSSTVSR) show a composition bias toward low complexity. Over residues 26 to 36 (APERRPAEELN) the composition is skewed to basic and acidic residues. In terms of domain architecture, KH spans 67-128 (ELPLCFALKS…AMQTKAKAVI (62 aa)). The Q motif motif lies at 242 to 270 (TFDDAFQCYPEVMENIKKAGFQKPTPIQS). The 176-residue stretch at 273–448 (WPIVLQGIDL…QSYLKEPMIV (176 aa)) folds into the Helicase ATP-binding domain. 286-293 (AQTGTGKT) contributes to the ATP binding site. The DEAD box motif lies at 396–399 (DEAD). The 162-residue stretch at 460–621 (SVKQNIIVTT…SIPEELVSMA (162 aa)) folds into the Helicase C-terminal domain. The span at 628–641 (QQKREMERKMERPQ) shows a compositional bias: basic and acidic residues. Residues 628-648 (QQKREMERKMERPQGRPKKFH) form a disordered region.

It belongs to the DEAD box helicase family. In terms of tissue distribution, expressed in testis. Expressed in many tumors of various histological types at a level that is 100-fold higher than the level observed in normal tissues except testis.

The enzyme catalyses ATP + H2O = ADP + phosphate + H(+). The sequence is that of Probable ATP-dependent RNA helicase DDX43 (DDX43) from Homo sapiens (Human).